The chain runs to 308 residues: Bifunctional protein FolD (308 aa).

NADP(+) is bound by residues G175–S177, S200, and I241.

Belongs to the tetrahydrofolate dehydrogenase/cyclohydrolase family. Homodimer.

It carries out the reaction (6R)-5,10-methylene-5,6,7,8-tetrahydrofolate + NADP(+) = (6R)-5,10-methenyltetrahydrofolate + NADPH. The enzyme catalyses (6R)-5,10-methenyltetrahydrofolate + H2O = (6R)-10-formyltetrahydrofolate + H(+). Its pathway is one-carbon metabolism; tetrahydrofolate interconversion. In terms of biological role, catalyzes the oxidation of 5,10-methylenetetrahydrofolate to 5,10-methenyltetrahydrofolate and then the hydrolysis of 5,10-methenyltetrahydrofolate to 10-formyltetrahydrofolate. The chain is Bifunctional protein FolD from Jannaschia sp. (strain CCS1).